The sequence spans 286 residues: Phosphatidylserine decarboxylase proenzyme (286 aa).

Active-site charge relay system; for autoendoproteolytic cleavage activity residues include aspartate 88, histidine 145, and serine 251. Serine 251 functions as the Schiff-base intermediate with substrate; via pyruvic acid; for decarboxylase activity in the catalytic mechanism. Position 251 is a pyruvic acid (Ser); by autocatalysis (serine 251).

Belongs to the phosphatidylserine decarboxylase family. PSD-B subfamily. Prokaryotic type I sub-subfamily. In terms of assembly, heterodimer of a large membrane-associated beta subunit and a small pyruvoyl-containing alpha subunit. Pyruvate is required as a cofactor. In terms of processing, is synthesized initially as an inactive proenzyme. Formation of the active enzyme involves a self-maturation process in which the active site pyruvoyl group is generated from an internal serine residue via an autocatalytic post-translational modification. Two non-identical subunits are generated from the proenzyme in this reaction, and the pyruvate is formed at the N-terminus of the alpha chain, which is derived from the carboxyl end of the proenzyme. The autoendoproteolytic cleavage occurs by a canonical serine protease mechanism, in which the side chain hydroxyl group of the serine supplies its oxygen atom to form the C-terminus of the beta chain, while the remainder of the serine residue undergoes an oxidative deamination to produce ammonia and the pyruvoyl prosthetic group on the alpha chain. During this reaction, the Ser that is part of the protease active site of the proenzyme becomes the pyruvoyl prosthetic group, which constitutes an essential element of the active site of the mature decarboxylase.

It localises to the cell membrane. The catalysed reaction is a 1,2-diacyl-sn-glycero-3-phospho-L-serine + H(+) = a 1,2-diacyl-sn-glycero-3-phosphoethanolamine + CO2. It functions in the pathway phospholipid metabolism; phosphatidylethanolamine biosynthesis; phosphatidylethanolamine from CDP-diacylglycerol: step 2/2. Functionally, catalyzes the formation of phosphatidylethanolamine (PtdEtn) from phosphatidylserine (PtdSer). The sequence is that of Phosphatidylserine decarboxylase proenzyme from Verminephrobacter eiseniae (strain EF01-2).